Here is a 150-residue protein sequence, read N- to C-terminus: Arginine repressor (150 aa).

The protein belongs to the ArgR family.

The protein resides in the cytoplasm. Its pathway is amino-acid biosynthesis; L-arginine biosynthesis [regulation]. Regulates arginine biosynthesis genes. The protein is Arginine repressor of Halothermothrix orenii (strain H 168 / OCM 544 / DSM 9562).